A 244-amino-acid polypeptide reads, in one-letter code: Tetraspanin-2A (244 aa).

The Cytoplasmic segment spans residues 1–22 (MGIGYGASDEQLEKQIGCVKYT). The chain crosses the membrane as a helical span at residues 23–43 (LFCFNIVAWMISTALFALTVW). Over 44–61 (LRAEPGFNDWLRILEAQS) the chain is Extracellular. A helical membrane pass occupies residues 62 to 82 (FYIGVYVLIGISIVMMAVSFL). Over 83–91 (GCLSALMEN) the chain is Cytoplasmic. A helical transmembrane segment spans residues 92 to 112 (TLALFVFVGTQVFGFIAIVAG). At 113-206 (SAVLLQFSTI…TWFFEGKTGW (94 aa)) the chain is on the extracellular side. A helical membrane pass occupies residues 207-227 (IVALAMTLGLLNVICAVMSFV). Over 228–244 (LVQAVKKEEEQASNYRR) the chain is Cytoplasmic.

It belongs to the tetraspanin (TM4SF) family. As to quaternary structure, forms a complex with Ssk and mesh.

It localises to the apicolateral cell membrane. It is found in the cell junction. The protein resides in the septate junction. In terms of biological role, required for assembly of smooth septate junctions (sSJs), together with Ssk and mesh. Important for barrier function of the midgut epithelium. This chain is Tetraspanin-2A, found in Drosophila melanogaster (Fruit fly).